Here is a 247-residue protein sequence, read N- to C-terminus: 1-(5-phosphoribosyl)-5-[(5-phosphoribosylamino)methylideneamino] imidazole-4-carboxamide isomerase (247 aa).

Asp8 functions as the Proton acceptor in the catalytic mechanism. Catalysis depends on Asp130, which acts as the Proton donor.

Belongs to the HisA/HisF family.

It is found in the cytoplasm. It catalyses the reaction 1-(5-phospho-beta-D-ribosyl)-5-[(5-phospho-beta-D-ribosylamino)methylideneamino]imidazole-4-carboxamide = 5-[(5-phospho-1-deoxy-D-ribulos-1-ylimino)methylamino]-1-(5-phospho-beta-D-ribosyl)imidazole-4-carboxamide. Its pathway is amino-acid biosynthesis; L-histidine biosynthesis; L-histidine from 5-phospho-alpha-D-ribose 1-diphosphate: step 4/9. The sequence is that of 1-(5-phosphoribosyl)-5-[(5-phosphoribosylamino)methylideneamino] imidazole-4-carboxamide isomerase from Leptospira biflexa serovar Patoc (strain Patoc 1 / Ames).